Here is a 338-residue protein sequence, read N- to C-terminus: Alanine racemase (338 aa).

The Proton acceptor; specific for D-alanine role is filled by Lys-33. Lys-33 carries the N6-(pyridoxal phosphate)lysine modification. Arg-126 is a substrate binding site. Tyr-236 (proton acceptor; specific for L-alanine) is an active-site residue. Met-284 contributes to the substrate binding site.

The protein belongs to the alanine racemase family. Requires pyridoxal 5'-phosphate as cofactor.

It carries out the reaction L-alanine = D-alanine. Its pathway is amino-acid biosynthesis; D-alanine biosynthesis; D-alanine from L-alanine: step 1/1. In terms of biological role, catalyzes the interconversion of L-alanine and D-alanine. May also act on other amino acids. The polypeptide is Alanine racemase (alr) (Aquifex aeolicus (strain VF5)).